A 259-amino-acid chain; its full sequence is Phosphate import ATP-binding protein PstB (259 aa).

The region spanning 13–254 (IAVKNLNFFY…PTRKETEDYI (242 aa)) is the ABC transporter domain. 45-52 (GPSGCGKS) is a binding site for ATP.

It belongs to the ABC transporter superfamily. Phosphate importer (TC 3.A.1.7) family. In terms of assembly, the complex is composed of two ATP-binding proteins (PstB), two transmembrane proteins (PstC and PstA) and a solute-binding protein (PstS).

The protein resides in the cell inner membrane. The enzyme catalyses phosphate(out) + ATP + H2O = ADP + 2 phosphate(in) + H(+). In terms of biological role, part of the ABC transporter complex PstSACB involved in phosphate import. Responsible for energy coupling to the transport system. In Albidiferax ferrireducens (strain ATCC BAA-621 / DSM 15236 / T118) (Rhodoferax ferrireducens), this protein is Phosphate import ATP-binding protein PstB.